The chain runs to 904 residues: Myelin regulatory factor-like protein (904 aa).

Positions 46–132 are disordered; that stretch reads LQRQLPDTPP…ATCRHQTGPS (87 aa). The span at 100 to 117 shows a compositional bias: polar residues; that stretch reads PSQSMAGQTHSSFQNGYP. Positions 108-400 form a DNA-binding region, NDT80; that stretch reads THSSFQNGYP…SNPGQFENDS (293 aa). The 109-residue stretch at 446 to 554 folds into the Peptidase S74 domain; the sequence is SDSRVKENIQ…KLTNNLEERI (109 aa). Residues 538-575 are a coiled coil; it reads GAVKQLCKLTNNLEERIEELEIWNKKLARLKRLSSSWK. A helical transmembrane segment spans residues 624–644; the sequence is LVVVLIAVMAFCALTIVALYI. The segment at 656–688 is disordered; the sequence is NLPLSNMTSSPEPALSSTAPTSAPHTTPETTQT. Residues 663–688 are compositionally biased toward low complexity; that stretch reads TSSPEPALSSTAPTSAPHTTPETTQT.

This sequence belongs to the MRF family.

The protein localises to the membrane. In Mus musculus (Mouse), this protein is Myelin regulatory factor-like protein (Myrfl).